The primary structure comprises 156 residues: Putative pre-16S rRNA nuclease (156 aa).

It belongs to the YqgF nuclease family.

It localises to the cytoplasm. Could be a nuclease involved in processing of the 5'-end of pre-16S rRNA. This chain is Putative pre-16S rRNA nuclease, found in Rickettsia typhi (strain ATCC VR-144 / Wilmington).